Here is a 574-residue protein sequence, read N- to C-terminus: NADH-ubiquinone oxidoreductase chain 5 (574 aa).

16 consecutive transmembrane segments (helical) span residues 10–30 (VASK…LYMV), 50–70 (MMMT…VVMI), 87–107 (FINR…MLIF), 111–131 (LIIL…LVIY), 141–161 (GMIT…AIAW), 181–203 (YQAL…SSWL), 211–231 (TPVS…FLLI), 240–260 (VWWF…MAGL), 280–300 (LGMM…FHMV), 301–321 (THAM…HSHM), 340–360 (TSCL…SGFY), 381–401 (LILF…MCVV), 423–443 (MLLL…ILPL), 458–478 (TLML…TTNM), 489–509 (IINY…QFMM), and 554–574 (TPMN…LVAI).

The protein belongs to the complex I subunit 5 family.

It is found in the mitochondrion inner membrane. It catalyses the reaction a ubiquinone + NADH + 5 H(+)(in) = a ubiquinol + NAD(+) + 4 H(+)(out). Its function is as follows. Core subunit of the mitochondrial membrane respiratory chain NADH dehydrogenase (Complex I) that is believed to belong to the minimal assembly required for catalysis. Complex I functions in the transfer of electrons from NADH to the respiratory chain. The immediate electron acceptor for the enzyme is believed to be ubiquinone. The protein is NADH-ubiquinone oxidoreductase chain 5 (ND5) of Lumbricus terrestris (Common earthworm).